The sequence spans 376 residues: tRNA-specific 2-thiouridylase MnmA (376 aa).

Residues G14 to S21 and M40 contribute to the ATP site. The interval N100–D102 is interaction with target base in tRNA. C105 serves as the catalytic Nucleophile. A disulfide bridge connects residues C105 and C202. Residue G129 coordinates ATP. An interaction with tRNA region spans residues K152–Q154. The active-site Cysteine persulfide intermediate is the C202. Residues R315–Y316 form an interaction with tRNA region.

This sequence belongs to the MnmA/TRMU family.

Its subcellular location is the cytoplasm. The enzyme catalyses S-sulfanyl-L-cysteinyl-[protein] + uridine(34) in tRNA + AH2 + ATP = 2-thiouridine(34) in tRNA + L-cysteinyl-[protein] + A + AMP + diphosphate + H(+). Functionally, catalyzes the 2-thiolation of uridine at the wobble position (U34) of tRNA, leading to the formation of s(2)U34. The chain is tRNA-specific 2-thiouridylase MnmA from Lactococcus lactis subsp. cremoris (strain SK11).